The following is a 390-amino-acid chain: Putative 8-amino-7-oxononanoate synthase (390 aa).

Position 20 (arginine 20) interacts with substrate. Position 107–108 (107–108 (GY)) interacts with pyridoxal 5'-phosphate. Histidine 132 is a substrate binding site. Pyridoxal 5'-phosphate-binding positions include serine 181, 206–209 (DDAH), and 237–240 (TLGK). Lysine 240 is subject to N6-(pyridoxal phosphate)lysine. Threonine 356 serves as a coordination point for substrate.

It belongs to the class-II pyridoxal-phosphate-dependent aminotransferase family. BioF subfamily. In terms of assembly, homodimer. The cofactor is pyridoxal 5'-phosphate.

The catalysed reaction is 6-carboxyhexanoyl-[ACP] + L-alanine + H(+) = (8S)-8-amino-7-oxononanoate + holo-[ACP] + CO2. It functions in the pathway cofactor biosynthesis; biotin biosynthesis. Catalyzes the decarboxylative condensation of pimeloyl-[acyl-carrier protein] and L-alanine to produce 8-amino-7-oxononanoate (AON), [acyl-carrier protein], and carbon dioxide. In Syntrophotalea carbinolica (strain DSM 2380 / NBRC 103641 / GraBd1) (Pelobacter carbinolicus), this protein is Putative 8-amino-7-oxononanoate synthase (bioF).